Consider the following 1723-residue polypeptide: Lys-gingipain (1723 aa).

A signal peptide spans 1 to 24 (MRKLLLLIAASLLGVGLYAQSAKI). A propeptide spanning residues 25–228 (KLDAPTTRTT…ETAYKQLFNR (204 aa)) is cleaved from the precursor. D313, D337, D339, F341, and E343 together coordinate Ca(2+). H444 (proton donor) is an active-site residue. The active-site Nucleophile is C477. Ca(2+) contacts are provided by F482 and E491. The interval 964 to 985 (WDAPNGTPNPNPNPNPGTTTLS) is disordered. Ca(2+) contacts are provided by S987, E989, D1000, D1002, D1004, H1006, S1021, G1023, N1042, D1145, E1146, D1430, E1432, D1444, D1446, D1448, N1450, S1480, N1495, and D1585.

This sequence belongs to the peptidase C25 family. Post-translationally, proteolytically cleaved into a catalytic subunit and three adhesins. Arg-gingipain is involved in this post-translational processing.

The protein resides in the secreted. The enzyme catalyses Endopeptidase with strict specificity for lysyl bonds.. Its activity is regulated as follows. Activated by the thiol-reducing agents cysteine, 2-mercaptoethanol and dithiothreitol. Inhibited by iodacetamide, iodoacetic acid, leupeptin, tosyl-L-lysine and tosyl-L-phenylalanine. Not inhibited by elastatinal, chymostatin, cystatins, alpha1-antichymotrypsin or the serine protease inhibitors phenylmethylsulfonyl fluoride and diisopropylfluorophosphate. Not inhibited by metal ion chelators. Inhibited by the heavy metal ions Fe(3+), Zn(2+), Cu(2+) and Mn(2+). Functionally, cysteine proteinase with a strong preference for substrates with Lys in the P1 position. Hydrolyzes bovine hemoglobin, bovine serum albumin, casein, human placental type I collagen and human IgA and IgG. Disrupts the functions of polymorphonuclear leukocytes. May act as a virulence factor in the development of peridontal disease. Involved in the coaggregation of P.gingivalis with other oral bacteria. The chain is Lys-gingipain from Porphyromonas gingivalis (strain ATCC 33277 / DSM 20709 / CIP 103683 / JCM 12257 / NCTC 11834 / 2561).